We begin with the raw amino-acid sequence, 123 residues long: MARIAGVNIPTNKRVVIALTYIYGIGLSLANRICEGCNIDHNVRVVNLSDDEIIRIRNFIRENYIVEGDLRKEVSMNIKFLTDIGCYRGLRHRRGLPVRGQRTHTNAKTRKGRSKLPVAAKKK.

Positions 97–123 (PVRGQRTHTNAKTRKGRSKLPVAAKKK) are disordered.

This sequence belongs to the universal ribosomal protein uS13 family. In terms of assembly, part of the 30S ribosomal subunit. Forms a loose heterodimer with protein S19. Forms two bridges to the 50S subunit in the 70S ribosome.

Functionally, located at the top of the head of the 30S subunit, it contacts several helices of the 16S rRNA. In the 70S ribosome it contacts the 23S rRNA (bridge B1a) and protein L5 of the 50S subunit (bridge B1b), connecting the 2 subunits; these bridges are implicated in subunit movement. Contacts the tRNAs in the A and P-sites. This is Small ribosomal subunit protein uS13 from Ehrlichia canis (strain Jake).